A 92-amino-acid polypeptide reads, in one-letter code: Probable Fe(2+)-trafficking protein (92 aa).

The protein belongs to the Fe(2+)-trafficking protein family.

Functionally, could be a mediator in iron transactions between iron acquisition and iron-requiring processes, such as synthesis and/or repair of Fe-S clusters in biosynthetic enzymes. The protein is Probable Fe(2+)-trafficking protein of Xanthomonas campestris pv. campestris (strain 8004).